We begin with the raw amino-acid sequence, 372 residues long: MAKRPEDTRVVVGMSGGVDSSVAALLLKEQGYDVIGIFMKNWDDTDENGFCTATEDYEDVIKVCNQIGIPYYAVNFEKQYWEKVFQYFLDEYKAGRTPNPDVMCNKEIKFKAFLEHALSLGADYLATGHYARVDRTDGRVKMLRGLDENKDQTYFLNQLTEEQLSKVLFPIGQLQKSRVREIAKEAGLATAAKKDSTGICFIGERNFKTFLSQYLPAQPGDMRTMEGEFKGRHDGLMYYTIGQRHGLGIGGSGEPWFVVGKDLEKNILYVDQGFDNPLLFSDKITATNVSFVHKGVFGGEEELACTAKFRYRQADHEVTVRMTGTDEAEVVFKEPVRAVTPGQAVVFYKGEECLGGGTIDDVFKDGQQLWYV.

ATP contacts are provided by residues 13 to 20 and methionine 39; that span reads GMSGGVDS. The segment at 99-101 is interaction with target base in tRNA; it reads NPD. Cysteine 104 functions as the Nucleophile in the catalytic mechanism. Cysteine 104 and cysteine 200 form a disulfide bridge. Glycine 128 provides a ligand contact to ATP. Residues 150–152 form an interaction with tRNA region; sequence KDQ. Cysteine 200 functions as the Cysteine persulfide intermediate in the catalytic mechanism. The segment at 310–311 is interaction with tRNA; it reads RY.

This sequence belongs to the MnmA/TRMU family.

The protein resides in the cytoplasm. The enzyme catalyses S-sulfanyl-L-cysteinyl-[protein] + uridine(34) in tRNA + AH2 + ATP = 2-thiouridine(34) in tRNA + L-cysteinyl-[protein] + A + AMP + diphosphate + H(+). Its function is as follows. Catalyzes the 2-thiolation of uridine at the wobble position (U34) of tRNA, leading to the formation of s(2)U34. This Bacillus licheniformis (strain ATCC 14580 / DSM 13 / JCM 2505 / CCUG 7422 / NBRC 12200 / NCIMB 9375 / NCTC 10341 / NRRL NRS-1264 / Gibson 46) protein is tRNA-specific 2-thiouridylase MnmA.